Consider the following 56-residue polypeptide: Large ribosomal subunit protein bL32 (56 aa).

The disordered stretch occupies residues Met-1 to His-37.

The protein belongs to the bacterial ribosomal protein bL32 family.

This chain is Large ribosomal subunit protein bL32, found in Photorhabdus laumondii subsp. laumondii (strain DSM 15139 / CIP 105565 / TT01) (Photorhabdus luminescens subsp. laumondii).